A 957-amino-acid chain; its full sequence is Ribonuclease 3-like protein 3 (957 aa).

Positions 4–142 constitute an RNase III 1 domain; the sequence is VEAVEKILNY…IAATVFIDVN (139 aa). A DRBM 1 domain is found at 307 to 382; sequence NGRGELIEIC…AYHMIRALES (76 aa). In terms of domain architecture, RNase III 2 spans 415 to 551; the sequence is VEAVEKILNY…VAGAVYIDVK (137 aa). DRBM domains follow at residues 566-645 and 837-912; these read EPIY…KLSE and DEKG…ALES.

Its function is as follows. Ribonuclease that cleaves double-stranded RNA (dsRNA). The sequence is that of Ribonuclease 3-like protein 3 (RTL3) from Arabidopsis thaliana (Mouse-ear cress).